The chain runs to 712 residues: Zinc finger and BTB domain-containing protein 39 (712 aa).

Residues 30-96 (CDVTIVVGSR…VYTSELFTDL (67 aa)) form the BTB domain. Disordered regions lie at residues 129-162 (ARAK…LRGG), 176-224 (SDAG…IPSM), and 236-260 (GIQT…KNSF). Over residues 134–147 (LTSTSESHSGTLSC) the composition is skewed to polar residues. A Glycyl lysine isopeptide (Lys-Gly) (interchain with G-Cter in SUMO2) cross-link involves residue Lys183. A C2H2-type 1 zinc finger spans residues 372-394 (GNCKVCETHFQDRNSRVTHVLSH). The C2H2-type 2; atypical zinc finger occupies 400–422 (FSCDMCETKFFTQWQLTLHRRDG). Residue Lys439 forms a Glycyl lysine isopeptide (Lys-Gly) (interchain with G-Cter in SUMO2) linkage. The C2H2-type 3; atypical zinc finger occupies 480–502 (QACSVCDQRHLNLCSLMWHTLSH). 4 C2H2-type zinc fingers span residues 508 to 530 (FSCS…MAVH), 538 to 560 (FHCR…VSQH), 605 to 627 (YSCK…RRIH), and 633 to 655 (YQCK…LKTH). Residues 661 to 683 (YRCTVCGHYSSTLNLMSKHVGVH) form a C2H2-type 8; atypical zinc finger.

This sequence belongs to the krueppel C2H2-type zinc-finger protein family.

It is found in the nucleus. Functionally, may be involved in transcriptional regulation. The sequence is that of Zinc finger and BTB domain-containing protein 39 (ZBTB39) from Homo sapiens (Human).